The sequence spans 175 residues: Gamma-crystallin B (175 aa).

2 consecutive Beta/gamma crystallin 'Greek key' domains span residues 2 to 40 (GKITFYEDRGFQGRCYECSSDCPNLQPYFSRCNSIRVDS) and 41 to 83 (GCWM…RLIP). The interval 84–88 (QHSGT) is connecting peptide. 2 consecutive Beta/gamma crystallin 'Greek key' domains span residues 89-129 (FRMR…NVLD) and 130-172 (GCWV…RRVM).

This sequence belongs to the beta/gamma-crystallin family. In terms of assembly, monomer.

In terms of biological role, crystallins are the dominant structural components of the vertebrate eye lens. In Canis lupus familiaris (Dog), this protein is Gamma-crystallin B (CRYGB).